Reading from the N-terminus, the 860-residue chain is DNA mismatch repair protein MutS (860 aa).

607–614 (GPNMSGKS) is a binding site for ATP.

It belongs to the DNA mismatch repair MutS family.

Its function is as follows. This protein is involved in the repair of mismatches in DNA. It is possible that it carries out the mismatch recognition step. This protein has a weak ATPase activity. This Listeria monocytogenes serotype 4b (strain CLIP80459) protein is DNA mismatch repair protein MutS.